We begin with the raw amino-acid sequence, 1063 residues long: Structural polyprotein (1063 aa).

The disordered stretch occupies residues 1-131; that stretch reads MASTTPITME…LGPPTNPFQA (131 aa). The segment at 30 to 69 is human C1QBP/SF2P32-binding; that stretch reads GASQSRRPRPPRQRDSSTSGDDSGRDSGGPRRRRGNRGRG. Ser46 bears the Phosphoserine; by host mark. A compositionally biased stretch (basic and acidic residues) spans 70 to 87; the sequence is QLRDWSRAPPPPEERQES. Pro residues predominate over residues 93–107; it reads APKPSRAPPQQPQPP. Cys153 and Cys197 form a disulfide bridge. A functions as E2 signal peptide region spans residues 279 to 300; the sequence is GAPQAFLAGLLLAAVAVGTARA. Topologically, residues 301-534 are extracellular; the sequence is GLQPRADMAA…LWLATANALS (234 aa). N-linked (GlcNAc...) asparagine; by host glycans are attached at residues Asn353, Asn371, Asn410, and Asn429. A helical membrane pass occupies residues 535-555; the sequence is LDHALAAFVLLVPWVLIFMVC. The Cytoplasmic segment spans residues 556-582; it reads RRACRRRGAAAALTAVVLQGYNPPAYG. Residues 563-582 are functions as E1 signal peptide; that stretch reads GAAAALTAVVLQGYNPPAYG. Residues 583-1028 are Extracellular-facing; the sequence is EEAFTYLCTA…QTWAEWAAAH (446 aa). Disulfide bonds link Cys590-Cys595, Cys619-Cys824, Cys641-Cys653, Cys699-Cys712, Cys758-Cys767, Cys807-Cys817, Cys931-Cys934, and Cys950-Cys983. The N-linked (GlcNAc...) asparagine; by host glycan is linked to Asn658. Asn670 and Ala671 together coordinate Ca(2+). Asp718 and Thr719 together coordinate Ca(2+). N-linked (GlcNAc...) asparagine; by host glycosylation is found at Asn759 and Asn791. O-linked (GalNAc...) threonine; by host glycans are attached at residues Thr1011 and Thr1012. Residues 1029 to 1049 form a helical membrane-spanning segment; that stretch reads WWQLTLGAICALLLAGLLACC. At 1050 to 1063 the chain is on the extracellular side; that stretch reads AKCLYYLRGAIAPR.

As to quaternary structure, homodimer; further assembles into homooligomer. Interacts with human C1QBP. Interacts (via N-terminus) with protease/methyltransferase p150. In terms of assembly, heterodimer with spike glycoprotein E2. Heterodimer with spike glycoprotein E1. Post-translationally, structural polyprotein: Specific enzymatic cleavages in vivo yield mature proteins. Two signal peptidase-mediated cleavages within the polyprotein produce the structural proteins capsid, E2, and E1. The E2 signal peptide remains attached to the C-terminus of the capsid protein after cleavage by the signal peptidase. Another signal peptide at E2 C-terminus directs E1 to the ER, with a similar mechanism. Contains three N-linked oligosaccharides. In terms of processing, capsid is phosphorylated on Ser-46 by host. This phosphorylation negatively regulates capsid protein RNA-binding activity. Dephosphorylated by human PP1A.

It localises to the virion. The protein localises to the host cytoplasm. Its subcellular location is the host mitochondrion. It is found in the virion membrane. The protein resides in the host Golgi apparatus membrane. Its function is as follows. Capsid protein interacts with genomic RNA and assembles into icosahedric core particles 65-70 nm in diameter. The resulting nucleocapsid eventually associates with the cytoplasmic domain of E2 at the cell membrane, leading to budding and formation of mature virions from host Golgi membranes. Phosphorylation negatively regulates RNA-binding activity, possibly delaying virion assembly during the viral replication phase. Capsid protein dimerizes and becomes disulfide-linked in the virion. Modulates genomic RNA replication. Modulates subgenomic RNA synthesis by interacting with human C1QBP/SF2P32. Induces both perinuclear clustering of mitochondria and the formation of electron-dense intermitochondrial plaques, both hallmarks of rubella virus infected cells. Induces apoptosis when expressed in transfected cells. Functionally, responsible for viral attachment to target host cell, by binding to the cell receptor. Its transport to the plasma membrane depends on interaction with E1 protein. The surface glycoproteins display an irregular helical organization and a pseudo-tetrameric inner nucleocapsid arrangement. In terms of biological role, class II viral fusion protein. Fusion activity is inactive as long as E1 is bound to E2 in mature virion. After virus attachment to target cell and clathrin-mediated endocytosis, acidification of the endosome would induce dissociation of E1/E2 heterodimer and concomitant trimerization of the E1 subunits. This E1 homotrimer is fusion active, and promotes release of viral nucleocapsid in cytoplasm after endosome and viral membrane fusion. The cytoplasmic tail of spike glycoprotein E1 modulates virus release. The surface glycoproteins display an irregular helical organization and a pseudo-tetrameric inner nucleocapsid arrangement. This Rubella virus (strain TO-336 vaccine) (RUBV) protein is Structural polyprotein.